The primary structure comprises 339 residues: Longiborneol synthase CLM1 (339 aa).

Over residues 1–17 (MLATPTLSNFDKPSLPS) the composition is skewed to polar residues. Residues 1-21 (MLATPTLSNFDKPSLPSSEGG) are disordered. Positions 112, 241, 245, and 249 each coordinate Mg(2+). Positions 241-249 (NDVLSFYKE) match the NDXXSXXXE magnesium-binding motif motif.

Belongs to the trichodiene synthase family. Mg(2+) serves as cofactor. It depends on Mn(2+) as a cofactor.

It carries out the reaction (2E,6E)-farnesyl diphosphate + H2O = (-)-longiborneol + diphosphate. The protein operates within mycotoxin biosynthesis. Functionally, terpene cyclase involved in the biosynthesis of culmorin, a tricyclic sesquiterpene diol reported to have antifungal activity and some phytotoxicity to wheat coleoptile tissue, contributing to Fusarium head blight disease. The terpene cyclase CLM1 is responsible for the cyclization of farnesyl diphosphate into the intermediate longiborneol. Longiborneol is then hydroxylated in a regio- and endo-stereoselective manner at position C-11 by the cytochrome P450 monooxygenase CLM2 to produce culmorin. Additional non-specific oxygenases are also able to hydroxylate longiborneol at other sites than C-11 leading to 3-hydroxylongiborneol, 5-hydroxylongiborneol, 12-hydroxylongiborneol and 15-hydroxylongiborneol. Moreover, another oxygenase capable of installing a C-11 exo-hydroxy group in longiborneol can also yield 11-epi-acetylculmorin. The production of these longiborneol derivatives is dwarfed by the high abundance of culmorin, suggesting that CLM2 displays superior enzymatic activity to the unidentified, possibly promiscuous, additional oxygenases. This is Longiborneol synthase CLM1 from Gibberella zeae (strain ATCC MYA-4620 / CBS 123657 / FGSC 9075 / NRRL 31084 / PH-1) (Wheat head blight fungus).